A 190-amino-acid polypeptide reads, in one-letter code: Elongation factor P-like protein (190 aa).

Belongs to the elongation factor P family.

The chain is Elongation factor P-like protein from Klebsiella pneumoniae subsp. pneumoniae (strain ATCC 700721 / MGH 78578).